Here is a 122-residue protein sequence, read N- to C-terminus: UPF0344 protein BcerKBAB4_1054 (122 aa).

The next 4 helical transmembrane spans lie at 6–26, 38–58, 65–85, and 92–112; these read ITAW…YSAG, LMYI…VKTA, WYGM…MVLV, and PTGA…YLGL.

Belongs to the UPF0344 family.

The protein localises to the cell membrane. The protein is UPF0344 protein BcerKBAB4_1054 of Bacillus mycoides (strain KBAB4) (Bacillus weihenstephanensis).